Reading from the N-terminus, the 147-residue chain is Lysozyme C (147 aa).

The N-terminal stretch at 1 to 18 is a signal peptide; sequence MRSLLVLVLCFLPLAALG. One can recognise a C-type lysozyme domain in the interval 19-147; sequence KVYGRCELAA…VNAWIRGCRL (129 aa). 4 disulfides stabilise this stretch: Cys24/Cys145, Cys48/Cys133, Cys82/Cys98, and Cys94/Cys112. Active-site residues include Glu53 and Asp70.

The protein belongs to the glycosyl hydrolase 22 family. As to quaternary structure, monomer.

It localises to the secreted. The catalysed reaction is Hydrolysis of (1-&gt;4)-beta-linkages between N-acetylmuramic acid and N-acetyl-D-glucosamine residues in a peptidoglycan and between N-acetyl-D-glucosamine residues in chitodextrins.. Its function is as follows. Lysozymes have primarily a bacteriolytic function; those in tissues and body fluids are associated with the monocyte-macrophage system and enhance the activity of immunoagents. The protein is Lysozyme C (LYZ) of Coturnix japonica (Japanese quail).